The chain runs to 136 residues: Putative pre-16S rRNA nuclease (136 aa).

The protein belongs to the YqgF nuclease family.

It is found in the cytoplasm. Its function is as follows. Could be a nuclease involved in processing of the 5'-end of pre-16S rRNA. The polypeptide is Putative pre-16S rRNA nuclease (Francisella tularensis subsp. novicida (strain U112)).